The sequence spans 536 residues: Phosphoenolpyruvate carboxykinase (ATP) (536 aa).

Substrate-binding residues include arginine 61, tyrosine 195, and lysine 201. Residues lysine 201, histidine 220, and 236-244 contribute to the ATP site; that span reads GLSGTGKTT. Mn(2+)-binding residues include lysine 201 and histidine 220. Aspartate 257 is a binding site for Mn(2+). Residues glutamate 285, arginine 322, and threonine 447 each coordinate ATP. Arginine 322 is a binding site for substrate.

The protein belongs to the phosphoenolpyruvate carboxykinase (ATP) family. It depends on Mn(2+) as a cofactor.

It is found in the cytoplasm. It carries out the reaction oxaloacetate + ATP = phosphoenolpyruvate + ADP + CO2. It functions in the pathway carbohydrate biosynthesis; gluconeogenesis. Functionally, involved in the gluconeogenesis. Catalyzes the conversion of oxaloacetate (OAA) to phosphoenolpyruvate (PEP) through direct phosphoryl transfer between the nucleoside triphosphate and OAA. This Chelativorans sp. (strain BNC1) protein is Phosphoenolpyruvate carboxykinase (ATP).